Reading from the N-terminus, the 324-residue chain is Viral cathepsin (324 aa).

Positions 1–16 are cleaved as a signal peptide; that stretch reads MNKIVLYLLVYGATLG. Positions 17–113 are cleaved as a propeptide — activation peptide; sequence AAYDLLKAPS…VVLDRPPDKG (97 aa). Cystine bridges form between Cys-134/Cys-175, Cys-168/Cys-208, and Cys-263/Cys-311. Residue Cys-137 is part of the active site. The N-linked (GlcNAc...) asparagine; by host glycan is linked to Asn-159. Active-site residues include His-270 and Asn-290.

Belongs to the peptidase C1 family. Synthesized as an inactive proenzyme and activated by proteolytic removal of the inhibitory propeptide.

It carries out the reaction Endopeptidase of broad specificity, hydrolyzing substrates of both cathepsin L and cathepsin B.. Cysteine protease that plays an essential role in host liquefaction to facilitate horizontal transmission of the virus. May participate in the degradation of foreign protein expressed by the baculovirus system. In Antheraea pernyi nuclear polyhedrosis virus (ApNPV), this protein is Viral cathepsin (VCATH).